We begin with the raw amino-acid sequence, 777 residues long: Endonuclease MutS2 (777 aa).

Gly328–Thr335 is a binding site for ATP. Residues Leu702–Lys777 form the Smr domain.

The protein belongs to the DNA mismatch repair MutS family. MutS2 subfamily. Homodimer. Binds to stalled ribosomes, contacting rRNA.

Its function is as follows. Endonuclease that is involved in the suppression of homologous recombination and thus may have a key role in the control of bacterial genetic diversity. In terms of biological role, acts as a ribosome collision sensor, splitting the ribosome into its 2 subunits. Detects stalled/collided 70S ribosomes which it binds and splits by an ATP-hydrolysis driven conformational change. Acts upstream of the ribosome quality control system (RQC), a ribosome-associated complex that mediates the extraction of incompletely synthesized nascent chains from stalled ribosomes and their subsequent degradation. Probably generates substrates for RQC. The protein is Endonuclease MutS2 of Streptococcus sanguinis (strain SK36).